Consider the following 233-residue polypeptide: 4'-phosphopantetheinyl transferase psf-1 (233 aa).

Positions 110, 112, and 154 each coordinate Mg(2+). Residues 161–192 are peptidyl carrier protein binding; the sequence is GKGISYGLSSFTARLSEDGQATLRLPDHEAPC.

Belongs to the P-Pant transferase superfamily. Gsp/Sfp/HetI/AcpT family. Mg(2+) is required as a cofactor.

The catalysed reaction is apo-[peptidyl-carrier protein] + CoA = holo-[peptidyl-carrier protein] + adenosine 3',5'-bisphosphate + H(+). Its function is as follows. Probably activates the peptidyl carrier protein (PCP) domains of surfactin synthetase by transferring the 4'-phosphopantetheinyl moiety of coenzyme A (CoA) to a serine residue. Required for the production of the lipopeptide antibiotic, surfactin. This chain is 4'-phosphopantetheinyl transferase psf-1 (psf-1), found in Bacillus pumilus (Bacillus mesentericus).